The chain runs to 273 residues: Testis-specific serine/threonine-protein kinase 6 (273 aa).

The Protein kinase domain maps to Tyr-12–Leu-267. ATP is bound by residues Ile-18–Val-26 and Lys-41. Residue Asp-135 is the Proton acceptor of the active site.

It belongs to the protein kinase superfamily. CAMK Ser/Thr protein kinase family. As to quaternary structure, microtubule inner protein component of sperm flagellar doublet microtubules. Interacts with HSP90; this interaction stabilizes and activates TSSK6. Interacts with the heat shock proteins HSPCB, HSPA8 and HSPA1A. These interactions appear to be required for TSSK6 kinase activity. Interacts with TSACC; this interaction is direct and recruits TSACC to HSP90, which is essential for kinase activity. It depends on Mg(2+) as a cofactor. Post-translationally, autophosphorylated. Ubiquitinated; HSP90 activity negatively regulates ubiquitination and degradation. In terms of tissue distribution, highly expressed in testis. Expressed at lower levels in colon, small intestine, ovary, prostate, thymus, spleen and peripheral blood leukocytes.

The protein resides in the cytoplasm. The protein localises to the cytoskeleton. It localises to the flagellum axoneme. It is found in the nucleus. The catalysed reaction is L-seryl-[protein] + ATP = O-phospho-L-seryl-[protein] + ADP + H(+). It carries out the reaction L-threonyl-[protein] + ATP = O-phospho-L-threonyl-[protein] + ADP + H(+). Functionally, serine/threonine-protein kinase component of the sperm flagellar doublet microtubules. May act as a regulator of sperm motility by mediating phosphorylation of sperm doublet microtubule proteins. Plays a role in DNA condensation during postmeiotic chromatin remodeling and histone-to-protamine transition during spermatogenesis. The protein is Testis-specific serine/threonine-protein kinase 6 of Homo sapiens (Human).